The following is a 102-amino-acid chain: Putative pterin-4-alpha-carbinolamine dehydratase (102 aa).

This sequence belongs to the pterin-4-alpha-carbinolamine dehydratase family.

It catalyses the reaction (4aS,6R)-4a-hydroxy-L-erythro-5,6,7,8-tetrahydrobiopterin = (6R)-L-erythro-6,7-dihydrobiopterin + H2O. This is Putative pterin-4-alpha-carbinolamine dehydratase from Burkholderia vietnamiensis (strain G4 / LMG 22486) (Burkholderia cepacia (strain R1808)).